Here is a 226-residue protein sequence, read N- to C-terminus: NADH-ubiquinone oxidoreductase chain 6 (226 aa).

A run of 6 helical transmembrane segments spans residues 1-21 (MNNF…ILVI), 27-47 (VISV…LVLL), 52-72 (IGIS…LFVI), 94-114 (PLAT…VPSF), 126-146 (IFKF…LGVG), and 185-205 (ALWL…PITL).

The protein belongs to the complex I subunit 6 family.

The protein localises to the mitochondrion inner membrane. It carries out the reaction a ubiquinone + NADH + 5 H(+)(in) = a ubiquinol + NAD(+) + 4 H(+)(out). Functionally, core subunit of the mitochondrial membrane respiratory chain NADH dehydrogenase (Complex I) that is believed to belong to the minimal assembly required for catalysis. Complex I functions in the transfer of electrons from NADH to the respiratory chain. The immediate electron acceptor for the enzyme is believed to be ubiquinone. This Mycosarcoma maydis (Corn smut fungus) protein is NADH-ubiquinone oxidoreductase chain 6 (ND6).